The primary structure comprises 243 residues: MSGHSKWSTIKRKKGTLDAKRNKIFTKLIREISIAARMGGGDIDSNPRLRLAVNKARVANMPKDNIEKAIKKGIGDNMGSEYFELTYEAYALYGVALIIKCLTDNKNRTASEVRSVLSKSGGSLGAPGSVSYMFHKKGLISYNLDKYHEDEIIELALEAGAEDIYSEGSQVEVITSADNFESVSSILRTKFEEDIAEVALVPESKVALDKEQMDKVLAIIEKLEDCDDVQEVYHNLEIVDDIC.

It belongs to the TACO1 family.

Its subcellular location is the cytoplasm. The chain is Probable transcriptional regulatory protein BDU_30 from Borrelia duttonii (strain Ly).